The following is a 179-amino-acid chain: Deoxyuridine 5'-triphosphate nucleotidohydrolase (179 aa).

Residues 90–92 (RSG), N103, 107–109 (TVD), and K117 contribute to the substrate site.

Belongs to the dUTPase family. The cofactor is Mg(2+).

It carries out the reaction dUTP + H2O = dUMP + diphosphate + H(+). The protein operates within pyrimidine metabolism; dUMP biosynthesis; dUMP from dCTP (dUTP route): step 2/2. Its function is as follows. This enzyme is involved in nucleotide metabolism: it produces dUMP, the immediate precursor of thymidine nucleotides and it decreases the intracellular concentration of dUTP so that uracil cannot be incorporated into DNA. The protein is Deoxyuridine 5'-triphosphate nucleotidohydrolase of Thermobifida fusca (strain YX).